A 469-amino-acid chain; its full sequence is Glutamate--tRNA ligase (469 aa).

Residues 11 to 21 carry the 'HIGH' region motif; that stretch reads PSPTGFIHLGN. Residues 118-131 are compositionally biased toward basic and acidic residues; it reads GEKPRYDGTWRPEP. Positions 118–139 are disordered; the sequence is GEKPRYDGTWRPEPGKVLPEPP. Residues 243-247 carry the 'KMSKS' region motif; sequence KMSKR. Lys-246 is a binding site for ATP.

Belongs to the class-I aminoacyl-tRNA synthetase family. Glutamate--tRNA ligase type 1 subfamily. In terms of assembly, monomer.

The protein resides in the cytoplasm. The catalysed reaction is tRNA(Glu) + L-glutamate + ATP = L-glutamyl-tRNA(Glu) + AMP + diphosphate. In terms of biological role, catalyzes the attachment of glutamate to tRNA(Glu) in a two-step reaction: glutamate is first activated by ATP to form Glu-AMP and then transferred to the acceptor end of tRNA(Glu). This Burkholderia pseudomallei (strain 668) protein is Glutamate--tRNA ligase.